The following is a 271-amino-acid chain: Formamidopyrimidine-DNA glycosylase (271 aa).

P2 acts as the Schiff-base intermediate with DNA in catalysis. E3 (proton donor) is an active-site residue. Residue K58 is the Proton donor; for beta-elimination activity of the active site. DNA contacts are provided by H92, R111, and R152. The FPG-type zinc-finger motif lies at 237–271 (SVYGREGEACKQCGRVLKHATIGQRATVWCGSCQR). The active-site Proton donor; for delta-elimination activity is the R261.

This sequence belongs to the FPG family. In terms of assembly, monomer. Zn(2+) is required as a cofactor.

It carries out the reaction Hydrolysis of DNA containing ring-opened 7-methylguanine residues, releasing 2,6-diamino-4-hydroxy-5-(N-methyl)formamidopyrimidine.. The enzyme catalyses 2'-deoxyribonucleotide-(2'-deoxyribose 5'-phosphate)-2'-deoxyribonucleotide-DNA = a 3'-end 2'-deoxyribonucleotide-(2,3-dehydro-2,3-deoxyribose 5'-phosphate)-DNA + a 5'-end 5'-phospho-2'-deoxyribonucleoside-DNA + H(+). Its function is as follows. Involved in base excision repair of DNA damaged by oxidation or by mutagenic agents. Acts as a DNA glycosylase that recognizes and removes damaged bases. Has a preference for oxidized purines, such as 7,8-dihydro-8-oxoguanine (8-oxoG). Has AP (apurinic/apyrimidinic) lyase activity and introduces nicks in the DNA strand. Cleaves the DNA backbone by beta-delta elimination to generate a single-strand break at the site of the removed base with both 3'- and 5'-phosphates. The polypeptide is Formamidopyrimidine-DNA glycosylase (Xanthomonas euvesicatoria pv. vesicatoria (strain 85-10) (Xanthomonas campestris pv. vesicatoria)).